A 224-amino-acid chain; its full sequence is Probable GTP-binding protein EngB (224 aa).

Residues 27–201 (SGIEVAFAGR…DAIICQWLEQ (175 aa)) form the EngB-type G domain. GTP contacts are provided by residues 35–42 (GRSNAGKS), 62–66 (GRTQL), 80–83 (DLPG), 147–150 (TKCD), and 180–182 (FSS). Ser42 and Thr64 together coordinate Mg(2+). Positions 205–224 (EYELPEEDDFDDSDEFTEEE) are disordered.

This sequence belongs to the TRAFAC class TrmE-Era-EngA-EngB-Septin-like GTPase superfamily. EngB GTPase family. Mg(2+) is required as a cofactor.

Its function is as follows. Necessary for normal cell division and for the maintenance of normal septation. The chain is Probable GTP-binding protein EngB from Colwellia psychrerythraea (strain 34H / ATCC BAA-681) (Vibrio psychroerythus).